The following is a 388-amino-acid chain: MMSPSTSAPHNQPIQPELDVLLVSTVLLLLGLGLVMVYSASIAIAEAKFGEGSSYYFLARQASYILAGIAVGIGCFRIPLRWWQAYSHYLLGLGILLLLVVLIPGISHEINGSRRWIPLGITSFQPSELMKLIILIFTADYVVRKAAFKDHFFKGFLPILALLTIVSLLLLMEPDLGATVVIAAIVLSIMFMNGMSLKMFFGLICLVPVLLALLIIIEPYRMDRINAIFDPWNDPFDKGYQLTHALIAFGLGEWWGVGLGSSVEKLNYLPEAHTDFMFAVLAEELGFAGVVTVISLFFFLLVRIFKVGRTAARLGDQFGSLVAQGIGVWLGLQAFINMGVNMGLLPTKGLTLPFMSYGGSSIVINSIAIAILLRIDWENRLKRRGLNA.

At Met1–Asp19 the chain is on the cytoplasmic side. A helical membrane pass occupies residues Val20 to Ala40. The Periplasmic segment spans residues Ser41–Tyr55. Residues Tyr56–Phe76 form a helical membrane-spanning segment. The Cytoplasmic segment spans residues Arg77–Tyr89. A helical membrane pass occupies residues Leu90 to Ile110. At Asn111–Trp116 the chain is on the periplasmic side. The helical transmembrane segment at Ile117–Phe137 threads the bilayer. At Thr138–His151 the chain is on the cytoplasmic side. A helical transmembrane segment spans residues Phe152–Met172. Over Glu173–Asp175 the chain is Periplasmic. Transmembrane regions (helical) follow at residues Leu176–Ser196 and Leu197–Ile217. The Periplasmic portion of the chain corresponds to Glu218–Glu284. The chain crosses the membrane as a helical span at residues Leu285–Phe305. The Cytoplasmic segment spans residues Lys306–Gln324. Residues Gly325–Leu345 form a helical membrane-spanning segment. At Pro346–Thr351 the chain is on the periplasmic side. A helical membrane pass occupies residues Leu352 to Leu372. Residues Leu373–Ala388 are Cytoplasmic-facing.

Belongs to the SEDS family. FtsW subfamily.

Its subcellular location is the cell inner membrane. It carries out the reaction [GlcNAc-(1-&gt;4)-Mur2Ac(oyl-L-Ala-gamma-D-Glu-L-Lys-D-Ala-D-Ala)](n)-di-trans,octa-cis-undecaprenyl diphosphate + beta-D-GlcNAc-(1-&gt;4)-Mur2Ac(oyl-L-Ala-gamma-D-Glu-L-Lys-D-Ala-D-Ala)-di-trans,octa-cis-undecaprenyl diphosphate = [GlcNAc-(1-&gt;4)-Mur2Ac(oyl-L-Ala-gamma-D-Glu-L-Lys-D-Ala-D-Ala)](n+1)-di-trans,octa-cis-undecaprenyl diphosphate + di-trans,octa-cis-undecaprenyl diphosphate + H(+). The protein operates within cell wall biogenesis; peptidoglycan biosynthesis. Functionally, peptidoglycan polymerase that is essential for cell division. The protein is Probable peptidoglycan glycosyltransferase FtsW of Nitrosomonas europaea (strain ATCC 19718 / CIP 103999 / KCTC 2705 / NBRC 14298).